Here is a 117-residue protein sequence, read N- to C-terminus: Probable glycerol dehydratase-reactivating factor small subunit (117 aa).

E31 lines the Mg(2+) pocket.

The protein belongs to the DdrB/PduH family. Member of the GDR complex, probably composed of DhaF(2)/DhaG(2). Mg(2+) serves as cofactor.

Functionally, small subunit of the glycerol dehydratase-reactivating factor (GDR), which reactivates suicidally inhibited adenosylcobalamin-dependent glycerol dehydratase. The polypeptide is Probable glycerol dehydratase-reactivating factor small subunit (Citrobacter freundii).